Reading from the N-terminus, the 83-residue chain is Small ribosomal subunit protein uS17 (83 aa).

Belongs to the universal ribosomal protein uS17 family. As to quaternary structure, part of the 30S ribosomal subunit.

In terms of biological role, one of the primary rRNA binding proteins, it binds specifically to the 5'-end of 16S ribosomal RNA. This Aliarcobacter butzleri (strain RM4018) (Arcobacter butzleri) protein is Small ribosomal subunit protein uS17.